The following is a 571-amino-acid chain: Double-stranded RNA-binding protein Staufen homolog 2 (571 aa).

One can recognise a DRBM 1 domain in the interval 8–75 (TPMCLVNELA…ANKALTESTL (68 aa)). Phosphoserine occurs at positions 9 and 13. R18 carries the post-translational modification Phosphothreonine. S21 carries the phosphoserine modification. Disordered regions lie at residues 71-94 (TEST…PGSI) and 178-203 (ALQN…DDKD). Residues 83-94 (PKSNVNNNPGSI) are compositionally biased toward polar residues. Residues 95-181 (TPTVELNGLA…AMKALQALQN (87 aa)) enclose the DRBM 2 domain. The residue at position 188 (S188) is a Phosphoserine. The span at 194-203 (SGKEMDDDKD) shows a compositional bias: basic and acidic residues. 2 DRBM domains span residues 207 to 274 (SEIS…ELKK) and 307 to 375 (NPIS…QLGY). 2 short sequence motifs (nuclear localization signal) span residues 273–317 (KKLP…QIQQ) and 373–412 (LGYK…PKGI). Positions 381-571 (LQDQLDKTGE…QDCKKSKSVI (191 aa)) are required for dendritic transport. Positions 382–413 (QDQLDKTGENKGWSGPKPGFPEPANNTPKGIL) are disordered. A phosphoserine mark is found at S395, S416, S426, S440, S456, and S493. The segment at 546-571 (LREKADNNQANPGSITQDCKKSKSVI) is disordered. Positions 552–562 (NNQANPGSITQ) are enriched in polar residues.

Identified in a mRNP complex, at least composed of DHX9, DDX3X, ELAVL1, HNRNPU, IGF2BP1, ILF3, PABPC1, PCBP2, PTBP2, STAU1, STAU2, SYNCRIP and YBX1. Interacts with the exportin XPO5. This requires RNA and RAN bound to GTP. Interacts with microtubules. Isoform 2 and isoform 3 may also interact with ribosomes, and this association is independent of translation. Interacts with TRIM71 (via NHL repeats) in an RNA-dependent manner. Expressed in both somata and dendrites of hippocampal neurons.

The protein localises to the nucleus. Its subcellular location is the nucleolus. It is found in the cytoplasm. It localises to the endoplasmic reticulum. Functionally, RNA-binding protein required for the microtubule-dependent transport of neuronal RNA from the cell body to the dendrite. As protein synthesis occurs within the dendrite, the localization of specific mRNAs to dendrites may be a prerequisite for neurite outgrowth and plasticity at sites distant from the cell body. The sequence is that of Double-stranded RNA-binding protein Staufen homolog 2 (Stau2) from Rattus norvegicus (Rat).